The sequence spans 432 residues: Trigger factor (432 aa).

The region spanning 161-246 is the PPIase FKBP-type domain; sequence DDRVTIDFVG…LKKVENMVLP (86 aa).

Belongs to the FKBP-type PPIase family. Tig subfamily.

The protein localises to the cytoplasm. The enzyme catalyses [protein]-peptidylproline (omega=180) = [protein]-peptidylproline (omega=0). Involved in protein export. Acts as a chaperone by maintaining the newly synthesized protein in an open conformation. Functions as a peptidyl-prolyl cis-trans isomerase. The protein is Trigger factor of Haemophilus influenzae (strain PittGG).